The primary structure comprises 234 residues: Large ribosomal subunit protein uL3 (234 aa).

The segment at 137–156 (AGHGVERKHRSPGSVGGCAT) is disordered.

The protein belongs to the universal ribosomal protein uL3 family. As to quaternary structure, part of the 50S ribosomal subunit. Forms a cluster with proteins L14 and L19.

Its function is as follows. One of the primary rRNA binding proteins, it binds directly near the 3'-end of the 23S rRNA, where it nucleates assembly of the 50S subunit. The polypeptide is Large ribosomal subunit protein uL3 (Frankia alni (strain DSM 45986 / CECT 9034 / ACN14a)).